We begin with the raw amino-acid sequence, 234 residues long: Probable ascorbate-specific transmembrane electron transporter 1 (234 aa).

Residues 1-9 lie on the Cytoplasmic side of the membrane; it reads MGLGVRAAP. A helical membrane pass occupies residues 10 to 30; the sequence is FTYVAHALAVAAATMVLVWCI. One can recognise a Cytochrome b561 domain in the interval 13 to 217; the sequence is VAHALAVAAA…FGASVVVAAV (205 aa). The Extracellular segment spans residues 31–48; it reads HFRGGLAFEATNKNLIFN. A helical membrane pass occupies residues 49 to 69; it reads VHPVLMLIGYIILGSEAIMVY. His50 lines the heme b pocket. 65–73 provides a ligand contact to L-ascorbate; sequence AIMVYKVLP. At 70–82 the chain is on the cytoplasmic side; the sequence is KVLPTWKHDTTKL. Residues 83–103 traverse the membrane as a helical segment; it reads IHLILHAIALVFGAVGIYCAF. Heme b-binding residues include His84 and His118. Residues 104–121 lie on the Extracellular side of the membrane; the sequence is KFHNESGIANLYSLHSWL. A monodehydro-L-ascorbate radical-binding site is contributed by 114-123; the sequence is LYSLHSWLGI. The chain crosses the membrane as a helical span at residues 122–142; it reads GIGTICLYGIQWIFGFVAFFF. Residues 143–151 are Cytoplasmic-facing; it reads PRASPSVRK. Residues 152-172 form a helical membrane-spanning segment; that stretch reads GVLPWHILFGLFVYILALATA. His157 lines the heme b pocket. Over 173-194 the chain is Extracellular; it reads ELGFLEKLTFLQSSGLDKYGAE. A helical membrane pass occupies residues 195-215; the sequence is AFLVNFTALIVVLFGASVVVA. Residues 216–234 lie on the Cytoplasmic side of the membrane; the sequence is AVSPARVEEPHEYAPIPES.

Heme b is required as a cofactor.

The protein resides in the membrane. Functionally, two-heme-containing cytochrome. Catalyzes ascorbate-dependent trans-membrane electron transfer by utilizing a concerted H(+)/e(-) transfer mechanism. The sequence is that of Probable ascorbate-specific transmembrane electron transporter 1 from Oryza sativa subsp. japonica (Rice).